Consider the following 628-residue polypeptide: 1-deoxy-D-xylulose-5-phosphate synthase (628 aa).

Residues H72 and 113–115 (GHS) contribute to the thiamine diphosphate site. Residue D144 participates in Mg(2+) binding. Thiamine diphosphate contacts are provided by residues 145–146 (GA), N173, Y284, and E366. N173 is a binding site for Mg(2+).

This sequence belongs to the transketolase family. DXPS subfamily. Homodimer. The cofactor is Mg(2+). Requires thiamine diphosphate as cofactor.

It carries out the reaction D-glyceraldehyde 3-phosphate + pyruvate + H(+) = 1-deoxy-D-xylulose 5-phosphate + CO2. It functions in the pathway metabolic intermediate biosynthesis; 1-deoxy-D-xylulose 5-phosphate biosynthesis; 1-deoxy-D-xylulose 5-phosphate from D-glyceraldehyde 3-phosphate and pyruvate: step 1/1. Its function is as follows. Catalyzes the acyloin condensation reaction between C atoms 2 and 3 of pyruvate and glyceraldehyde 3-phosphate to yield 1-deoxy-D-xylulose-5-phosphate (DXP). The chain is 1-deoxy-D-xylulose-5-phosphate synthase from Shouchella clausii (strain KSM-K16) (Alkalihalobacillus clausii).